Reading from the N-terminus, the 86-residue chain is Small ribosomal subunit protein bS20 (86 aa).

Residues 1–11 show a composition bias toward polar residues; sequence MANIKSQIKRN. Residues 1–20 form a disordered region; it reads MANIKSQIKRNLTNEKRHQA.

The protein belongs to the bacterial ribosomal protein bS20 family.

Binds directly to 16S ribosomal RNA. This is Small ribosomal subunit protein bS20 from Acholeplasma laidlawii (strain PG-8A).